A 938-amino-acid chain; its full sequence is Respiratory burst oxidase homolog protein C (938 aa).

Residues 1-63 (MQNSENHHPH…DIGTSAGAGA (63 aa)) are disordered. Residues 1–369 (MQNSENHHPH…MYFLLDNWQR (369 aa)) are Cytoplasmic-facing. A coiled-coil region spans residues 115–141 (ASLVRNASSRIRQVSQELKRLASLNKR). EF-hand-like regions lie at residues 185 to 195 (TAPTTGLLPRA) and 222 to 233 (RNITTDSINKAQ). EF-hand domains follow at residues 245-280 (SFDT…SASA) and 289-324 (QSDE…APNQ). Ca(2+) is bound by residues D258, D260, D262, R264, and E269. The helical transmembrane segment at 370-390 (VWVLLLWIGIMAVLFTWKYIQ) threads the bilayer. The Extracellular portion of the chain corresponds to 391–402 (YKQKAAYDVMGP). Residues 403-423 (CVCLAKGAAETIKLNMAIILL) traverse the membrane as a helical segment. In terms of domain architecture, Ferric oxidoreductase spans 408 to 565 (KGAAETIKLN…LFIIVYTLLI (158 aa)). Over 424-454 (PVCRNTITWLRNKTRLGSAVPFDDNLNFHKV) the chain is Cytoplasmic. A helical membrane pass occupies residues 455–475 (IAVAIALGVAIHGLAHLTCDF). Residues 476 to 509 (PKLLNASEEAYEPMIYYFGEQPESYWWFVRGVEG) lie on the Extracellular side of the membrane. The chain crosses the membrane as a helical span at residues 510 to 530 (VTGIIMVVLMAIAFTLATPWF). Residues 531–545 (RRGRVSFPKPFHKLT) are Cytoplasmic-facing. A helical transmembrane segment spans residues 546–566 (GFNAFWYSHHLFIIVYTLLIV). The Extracellular segment spans residues 567 to 580 (HGEKLYITKDWYKR). Residues 581-599 (STWMYLTVPLVLYAGERLL) form a helical membrane-spanning segment. An FAD-binding FR-type domain is found at 599 to 727 (LRAFRSSIKA…DGPYGAPAQD (129 aa)). Residues 600-732 (RAFRSSIKAV…APAQDYKQYE (133 aa)) lie on the Cytoplasmic side of the membrane. The helical transmembrane segment at 733–753 (VVLLVGLGIGATPMISIVKDI) threads the bilayer. The Extracellular segment spans residues 754 to 938 (VNNMKAMDEE…TKFDFHKENF (185 aa)). The segment at 762 to 796 (EEENSLENGNGMSNAAQNASPNMAQKRGKSSSASG) is disordered. The span at 767-784 (LENGNGMSNAAQNASPNM) shows a compositional bias: polar residues.

It belongs to the RBOH (TC 5.B.1.3) family. Monomer and homodimer. Phosphorylated by CPK. In terms of tissue distribution, expressed in leaves.

The protein resides in the membrane. Its function is as follows. Calcium-dependent NADPH oxidase that generates superoxide. May be responsible for the oxidative burst in response to pathogen attack in the leaves. The chain is Respiratory burst oxidase homolog protein C (RBOHC) from Solanum tuberosum (Potato).